We begin with the raw amino-acid sequence, 365 residues long: MEELEGHRGEGRLPPPPPLLPFPKVSVQVYTVPSSSTAASAAAAGGARQAVAPATRDGGDGGGRAAGVLDDPVKARIVSHPRYHRLLAAFLDCHKVGCPAEAAEEIAAAARVREARQRAAAAASRMPPAPEDPELDQFMEDYCKLLVECKEELSRPLQEAEEFLRTVESELNSINSGPPLTALISESKAGLDSSDDDEHEDGSGMEMMEAAEDEDLGIIDPRSDDKALKRHLLRKYSGYLGGLRKELSKKRKKGKLPKEARQKLLTWWELHYRWPNPSEMEKIALAESTGLEQKQINNCFINQRKRHWKPTEEMEFAVMEAYHHQSTDAAAAFYVDVDARLVGATAAAPASAVYTARPDHGVWRA.

The segment covering 1–11 has biased composition (basic and acidic residues); it reads MEELEGHRGEG. Residues 1-20 form a disordered region; the sequence is MEELEGHRGEGRLPPPPPLL. Positions 227-247 constitute an ELK domain; sequence ALKRHLLRKYSGYLGGLRKEL. Positions 248 to 311 form a DNA-binding region, homeobox; TALE-type; it reads SKKRKKGKLP…NQRKRHWKPT (64 aa).

The protein belongs to the TALE/KNOX homeobox family.

The protein resides in the nucleus. Probable transcription factor that may be involved in shoot formation during embryogenesis. The sequence is that of Homeobox protein knotted-1-like 7 (OSH3) from Oryza sativa subsp. japonica (Rice).